A 1056-amino-acid polypeptide reads, in one-letter code: PH and SEC7 domain-containing protein 4 (1056 aa).

Residues 25–42 (LEPHPGECPRETCSHEDP) show a composition bias toward basic and acidic residues. Disordered regions lie at residues 25–71 (LEPH…SGVE), 87–149 (CQEQ…QNRS), 195–239 (LPGD…QWGA), 340–362 (GAPA…APSA), 388–533 (VQPW…GDVQ), and 546–581 (LRTP…LANG). 2 stretches are compositionally biased toward polar residues: residues 88–99 (QEQTRATDPPES) and 128–137 (NTASPGSPVN). Phosphoserine is present on residues Ser-131, Ser-134, and Ser-143. Over residues 207-220 (ENEDSGEDSSEPEG) the composition is skewed to acidic residues. Ser-413 is modified (phosphoserine). Residues 414–423 (QDRDEREGGH) are compositionally biased toward basic and acidic residues. The segment covering 438–456 (RSPASSPEPSSPESESRGP) has biased composition (low complexity). Ser-448, Ser-469, and Ser-491 each carry phosphoserine. Composition is skewed to polar residues over residues 466-476 (QEGSPQLQHHS) and 486-502 (DASQ…QPSS). The span at 504 to 522 (KKKEAGEAPKPGEEVKSEG) shows a compositional bias: basic and acidic residues. An SEC7 domain is found at 544-736 (ENLRTPMNSS…KALYWSIRSE (193 aa)). Over residues 548–567 (TPMNSSWLPGSPMPQAQSPE) the composition is skewed to polar residues. The 117-residue stretch at 776–892 (PTYKQGILAR…WIARINLAAA (117 aa)) folds into the PH domain. Residues 921–976 (SSLEEQHRSHENCLDAAADDLLDLQRNLPERRGRGRELEEHRLRKEYLEYEKTRYE) are a coiled coil. The segment at 1004–1056 (AGGTREPKLSLKKSHSSPSLHQDEAPTTAKVKRNISERRTYRKIIPKRNRNQL) is disordered. Phosphoserine occurs at positions 1019 and 1022. Residues 1043-1056 (TYRKIIPKRNRNQL) show a composition bias toward basic residues.

In terms of tissue distribution, widely expressed. Highest levels of expression are found in placenta, pancreas, spleen, thymus and peripheral blood.

The protein localises to the cell membrane. The protein resides in the cell projection. It localises to the ruffle membrane. Its function is as follows. Guanine nucleotide exchange factor for ARF6 and ARL14/ARF7. Through ARL14 activation, controls the movement of MHC class II-containing vesicles along the actin cytoskeleton in dendritic cells. Involved in membrane recycling. Interacts with several phosphatidylinositol phosphate species, including phosphatidylinositol 3,4-bisphosphate, phosphatidylinositol 3,5-bisphosphate and phosphatidylinositol 4,5-bisphosphate. This Homo sapiens (Human) protein is PH and SEC7 domain-containing protein 4 (PSD4).